Consider the following 660-residue polypeptide: DNA ligase (660 aa).

NAD(+) is bound by residues 33–37, 82–83, and glutamate 110; these read DFVYD and SL. Lysine 112 functions as the N6-AMP-lysine intermediate in the catalytic mechanism. 4 residues coordinate NAD(+): arginine 133, glutamate 167, lysine 281, and lysine 305. Residues cysteine 396, cysteine 399, cysteine 412, and cysteine 417 each coordinate Zn(2+). Residues 583–660 enclose the BRCT domain; that stretch reads DENRLLAGKK…SFEDIKSYLN (78 aa).

It belongs to the NAD-dependent DNA ligase family. LigA subfamily. Mg(2+) is required as a cofactor. It depends on Mn(2+) as a cofactor.

The enzyme catalyses NAD(+) + (deoxyribonucleotide)n-3'-hydroxyl + 5'-phospho-(deoxyribonucleotide)m = (deoxyribonucleotide)n+m + AMP + beta-nicotinamide D-nucleotide.. Functionally, DNA ligase that catalyzes the formation of phosphodiester linkages between 5'-phosphoryl and 3'-hydroxyl groups in double-stranded DNA using NAD as a coenzyme and as the energy source for the reaction. It is essential for DNA replication and repair of damaged DNA. In Borrelia garinii subsp. bavariensis (strain ATCC BAA-2496 / DSM 23469 / PBi) (Borreliella bavariensis), this protein is DNA ligase.